Here is a 378-residue protein sequence, read N- to C-terminus: MSKRDYYEVLGVGRDASEREIKKAYKRLAMKFHPDRNPGDKAAEASFKEVKEAYEILTDANKKAAYDQFGHAGVDPNRGGGGGYGGAGDFGDIFGDVFGDIFGGGRRGGGQRQAARGSDLRYNLELSLEEAVKGLTKELRIPTLASCDVCDGSGAKKGTSATTCTTCHGQGQVQMRQGFFTVQQPCPTCHGRGKIIKDPCAKCHGDGRVEKTKTLSVKIPAGVDTGDRIRLAGEGEAGEFGAPAGDLYVQVSVREHAIFVRDGNNLYCEVPISFSKAALGGEIEVPTLDGKVSLKIPAETQTGRMFRLRGKGVKSVRSHAVGDLLCKVVMETPVNLNERQKELLREFEATLTGESKKHSPKAEGFFDGVKKFFQDLNS.

The J domain maps to 5–70 (DYYEVLGVGR…NKKAAYDQFG (66 aa)). The CR-type zinc-finger motif lies at 134 to 212 (GLTKELRIPT…CHGDGRVEKT (79 aa)). Zn(2+) contacts are provided by cysteine 147, cysteine 150, cysteine 164, cysteine 167, cysteine 186, cysteine 189, cysteine 200, and cysteine 203. 4 CXXCXGXG motif repeats span residues 147–154 (CDVCDGSG), 164–171 (CTTCHGQG), 186–193 (CPTCHGRG), and 200–207 (CAKCHGDG).

The protein belongs to the DnaJ family. As to quaternary structure, homodimer. Zn(2+) is required as a cofactor.

The protein resides in the cytoplasm. Its function is as follows. Participates actively in the response to hyperosmotic and heat shock by preventing the aggregation of stress-denatured proteins and by disaggregating proteins, also in an autonomous, DnaK-independent fashion. Unfolded proteins bind initially to DnaJ; upon interaction with the DnaJ-bound protein, DnaK hydrolyzes its bound ATP, resulting in the formation of a stable complex. GrpE releases ADP from DnaK; ATP binding to DnaK triggers the release of the substrate protein, thus completing the reaction cycle. Several rounds of ATP-dependent interactions between DnaJ, DnaK and GrpE are required for fully efficient folding. Also involved, together with DnaK and GrpE, in the DNA replication of plasmids through activation of initiation proteins. This is Chaperone protein DnaJ from Shewanella oneidensis (strain ATCC 700550 / JCM 31522 / CIP 106686 / LMG 19005 / NCIMB 14063 / MR-1).